A 193-amino-acid chain; its full sequence is Phosphoheptose isomerase (193 aa).

The SIS domain occupies 37-193 (LADSFKAGGK…QLIEKEMVKA (157 aa)). 52–54 (NGG) provides a ligand contact to substrate. Zn(2+)-binding residues include His61 and Glu65. Substrate-binding positions include Glu65, 93-94 (ND), 119-121 (STS), Ser124, and Gln172. Zn(2+) contacts are provided by Gln172 and His180.

It belongs to the SIS family. GmhA subfamily. Homotetramer. It depends on Zn(2+) as a cofactor.

It is found in the cytoplasm. It catalyses the reaction 2 D-sedoheptulose 7-phosphate = D-glycero-alpha-D-manno-heptose 7-phosphate + D-glycero-beta-D-manno-heptose 7-phosphate. It functions in the pathway carbohydrate biosynthesis; D-glycero-D-manno-heptose 7-phosphate biosynthesis; D-glycero-alpha-D-manno-heptose 7-phosphate and D-glycero-beta-D-manno-heptose 7-phosphate from sedoheptulose 7-phosphate: step 1/1. Its function is as follows. Catalyzes the isomerization of sedoheptulose 7-phosphate in D-glycero-D-manno-heptose 7-phosphate. The polypeptide is Phosphoheptose isomerase (Yersinia pseudotuberculosis serotype O:1b (strain IP 31758)).